The following is a 128-amino-acid chain: Crossover junction endodeoxyribonuclease Hjc (128 aa).

A Mg(2+)-binding site is contributed by Glu10. The active site involves Ser30. Positions 34 and 47 each coordinate Mg(2+).

This sequence belongs to the Holliday junction resolvase Hjc family. Homodimer. The cofactor is Mg(2+).

It catalyses the reaction Endonucleolytic cleavage at a junction such as a reciprocal single-stranded crossover between two homologous DNA duplexes (Holliday junction).. In terms of biological role, a structure-specific endonuclease that resolves Holliday junction (HJ) intermediates during genetic recombination. Cleaves 4-way DNA junctions introducing paired nicks in opposing strands, leaving a 5'-terminal phosphate and a 3'-terminal hydroxyl group that are subsequently ligated to produce recombinant products. The sequence is that of Crossover junction endodeoxyribonuclease Hjc from Thermococcus kodakarensis (strain ATCC BAA-918 / JCM 12380 / KOD1) (Pyrococcus kodakaraensis (strain KOD1)).